A 281-amino-acid chain; its full sequence is NADPH-dependent 7-cyano-7-deazaguanine reductase (281 aa).

A substrate-binding site is contributed by 81–83; it reads IES. 83-84 lines the NADPH pocket; that stretch reads SK. Catalysis depends on Cys188, which acts as the Thioimide intermediate. The Proton donor role is filled by Asp195. Residue 227 to 228 participates in substrate binding; sequence HE. Position 256–257 (256–257) interacts with NADPH; the sequence is RG.

Belongs to the GTP cyclohydrolase I family. QueF type 2 subfamily. In terms of assembly, homodimer.

It is found in the cytoplasm. It carries out the reaction 7-aminomethyl-7-carbaguanine + 2 NADP(+) = 7-cyano-7-deazaguanine + 2 NADPH + 3 H(+). The protein operates within tRNA modification; tRNA-queuosine biosynthesis. Catalyzes the NADPH-dependent reduction of 7-cyano-7-deazaguanine (preQ0) to 7-aminomethyl-7-deazaguanine (preQ1). The protein is NADPH-dependent 7-cyano-7-deazaguanine reductase of Paracidovorax citrulli (strain AAC00-1) (Acidovorax citrulli).